Here is a 306-residue protein sequence, read N- to C-terminus: Low-density lipoprotein receptor class A domain-containing protein 4 (306 aa).

The Lumenal segment spans residues 1 to 64 (MPEAGFQATN…PPGIFNSELE (64 aa)). The 38-residue stretch at 11-48 (AFTECKFTCTSGKCLYLGSLVCNQQNDCGDNSDEENCL) folds into the LDL-receptor class A domain. Intrachain disulfides connect Cys-19-Cys-38 and Cys-32-Cys-47. Residues 65–85 (FAQILIIVVVVTVMVVVVVCL) form a helical membrane-spanning segment. Residues 86 to 306 (LNHYKVSTRS…GKDRKPGDLV (221 aa)) lie on the Cytoplasmic side of the membrane. Positions 100 to 127 (PNQSQRQEDGLQPEGSLWPSDSSVQRPG) are disordered. Residues 180 to 183 (PPPY) carry the PPxY motif 1 motif. The SMAD interaction motif (SIM) signature appears at 208 to 211 (PPNR). The short motif at 252–255 (PPTY) is the PPxY motif 2 element. The segment at 268–306 (FHHQHSNTHRGSRPQFQPNNSEGTIVPIKGKDRKPGDLV) is disordered. Residues 269–279 (HHQHSNTHRGS) are compositionally biased toward basic residues. Residues 281–290 (PQFQPNNSEG) show a composition bias toward polar residues. Residues 296–306 (KGKDRKPGDLV) show a composition bias toward basic and acidic residues.

This sequence belongs to the PMEPA1 family. Interacts with PMEPA1. Interacts (via the SMAD interaction motif) with SMAD2 and SMAD3. In terms of tissue distribution, detected in all tissues tested.

The protein resides in the early endosome membrane. Its function is as follows. Functions as a negative regulator of TGF-beta signaling and thereby probably plays a role in cell proliferation, differentiation, apoptosis, motility, extracellular matrix production and immunosuppression. In the canonical TGF-beta pathway, ZFYVE9/SARA recruits the intracellular signal transducer and transcriptional modulators SMAD2 and SMAD3 to the TGF-beta receptor. Phosphorylated by the receptor, SMAD2 and SMAD3 then form a heteromeric complex with SMAD4 that translocates to the nucleus to regulate transcription. Through interaction with SMAD2 and SMAD3, LDLRAD4 may compete with ZFYVE9 and SMAD4 and prevent propagation of the intracellular signal. This is Low-density lipoprotein receptor class A domain-containing protein 4 (Ldlrad4) from Mus musculus (Mouse).